The primary structure comprises 221 residues: Probable septum site-determining protein MinC (221 aa).

It belongs to the MinC family. As to quaternary structure, interacts with MinD and FtsZ.

In terms of biological role, cell division inhibitor that blocks the formation of polar Z ring septums. Rapidly oscillates between the poles of the cell to destabilize FtsZ filaments that have formed before they mature into polar Z rings. Prevents FtsZ polymerization. This is Probable septum site-determining protein MinC from Shewanella oneidensis (strain ATCC 700550 / JCM 31522 / CIP 106686 / LMG 19005 / NCIMB 14063 / MR-1).